Consider the following 472-residue polypeptide: Nuclear hormone receptor family member nhr-2 (472 aa).

Polar residues-rich tracts occupy residues 57–83, 90–112, 138–147, and 159–171; these read TATN…LSQI, NDTI…HNQP, LSSTQSSPDN, and VRRN…SAST. 2 disordered regions span residues 57–112 and 138–184; these read TATN…HNQP and LSST…RTNT. The segment at residues 215–297 is a DNA-binding region (nuclear receptor); sequence KDRCMVCGDN…VGMNRDNVRV (83 aa). 2 NR C4-type zinc fingers span residues 218 to 238 and 267 to 285; these read CMVC…CEGC and CAAN…FAKC.

The protein belongs to the nuclear hormone receptor family.

It localises to the nucleus. Functionally, orphan nuclear receptor. In Caenorhabditis elegans, this protein is Nuclear hormone receptor family member nhr-2 (nhr-2).